Consider the following 42-residue polypeptide: Perlinhibin-related protein (42 aa).

Contains four disulfide bonds.

In terms of biological role, inhibitor of shell growth. The sequence is that of Perlinhibin-related protein from Haliotis laevigata (Smooth Australian abalone).